The sequence spans 322 residues: Protein-L-isoaspartate O-methyltransferase (322 aa).

Residues 1–101 (MSGERAKRFP…AKQGDRSAAP (101 aa)) are disordered. A compositionally biased stretch (basic and acidic residues) spans 14–29 (EDLKREPRKPEGRVAE). Low complexity-rich tracts occupy residues 33–51 (AGDAARQRLTAAAAVPAAA) and 76–91 (HAPAAPGAAKRAPQGG). Ser170 is an active-site residue.

This sequence belongs to the methyltransferase superfamily. L-isoaspartyl/D-aspartyl protein methyltransferase family.

The protein resides in the cytoplasm. It carries out the reaction [protein]-L-isoaspartate + S-adenosyl-L-methionine = [protein]-L-isoaspartate alpha-methyl ester + S-adenosyl-L-homocysteine. Catalyzes the methyl esterification of L-isoaspartyl residues in peptides and proteins that result from spontaneous decomposition of normal L-aspartyl and L-asparaginyl residues. It plays a role in the repair and/or degradation of damaged proteins. The protein is Protein-L-isoaspartate O-methyltransferase of Burkholderia pseudomallei (strain 1106a).